We begin with the raw amino-acid sequence, 434 residues long: Solute carrier RCH1 (434 aa).

Over 1–15 (MKTQYSLIRKIWAHS) the chain is Cytoplasmic. Residues 16 to 36 (VTEFLKSQWFFICLAILIVIA) form a helical membrane-spanning segment. The Extracellular segment spans residues 37-50 (RFAPNFARDGGLIK). A helical membrane pass occupies residues 51-71 (GQYSIGYGCVAWIFLQSGLGM). Over 72 to 87 (KSRSLMANMLNWRAHA) the chain is Cytoplasmic. Residues 88–108 (TILVLSFLITSSIVYGFCCAV) form a helical membrane-spanning segment. Residues 109–118 (KAANDPKIDD) lie on the Extracellular side of the membrane. The chain crosses the membrane as a helical span at residues 119–139 (WVLIGLILTATCPTTVASNVI). The Cytoplasmic segment spans residues 140-149 (MTTNAGGNSL). Residues 150–170 (LCVCEVFIGNLLGAFITPALV) traverse the membrane as a helical segment. At 171–199 (QMFTNRAPFAYGNPATGNGIGALYGRVMK) the chain is on the extracellular side. The helical transmembrane segment at 200–220 (QVGLSVFVPLFVGQVIQNCFP) threads the bilayer. Topologically, residues 221 to 234 (KGTAYYLGFLKKYH) are cytoplasmic. Residues 235–255 (IKIGSYMLLLIMFSSFSTAFY) form a helical membrane-spanning segment. The Extracellular portion of the chain corresponds to 256–264 (QDAFTSVSH). A helical membrane pass occupies residues 265–285 (VCIIFLCFFNLGIYIFFTGLS). The Cytoplasmic portion of the chain corresponds to 286 to 327 (YLCARPWFILKLFPHEPIEGKSTRLYRYSYNIFRPFYYSKED). The chain crosses the membrane as a helical span at residues 328–348 (AICIMFCGPAKTAALGVSLIT). Residues 349 to 362 (SQYGDKKEHLGKLL) are Extracellular-facing. Residues 363–383 (VPLVLYQVEQVMTANFFVSLF) traverse the membrane as a helical segment. Residues 384–434 (KRWIQKDAQADGSESSCANENEEVDLEKIISIGTGENQSVLSNNVPYTQPR) lie on the Cytoplasmic side of the membrane. S425 bears the Phosphoserine mark.

It belongs to the bile acid:sodium symporter (BASS) (TC 2.A.28) family.

The protein resides in the cell membrane. Its subcellular location is the bud neck. In terms of biological role, solute carrier protein that negatively regulates the cytosolic calcium homeostasis in response to high levels of extracellular calcium. The chain is Solute carrier RCH1 from Saccharomyces cerevisiae (strain ATCC 204508 / S288c) (Baker's yeast).